The sequence spans 251 residues: Imidazole glycerol phosphate synthase subunit HisF (251 aa).

Residues Asp-11 and Asp-130 contribute to the active site.

Belongs to the HisA/HisF family. In terms of assembly, heterodimer of HisH and HisF.

It is found in the cytoplasm. It carries out the reaction 5-[(5-phospho-1-deoxy-D-ribulos-1-ylimino)methylamino]-1-(5-phospho-beta-D-ribosyl)imidazole-4-carboxamide + L-glutamine = D-erythro-1-(imidazol-4-yl)glycerol 3-phosphate + 5-amino-1-(5-phospho-beta-D-ribosyl)imidazole-4-carboxamide + L-glutamate + H(+). Its pathway is amino-acid biosynthesis; L-histidine biosynthesis; L-histidine from 5-phospho-alpha-D-ribose 1-diphosphate: step 5/9. In terms of biological role, IGPS catalyzes the conversion of PRFAR and glutamine to IGP, AICAR and glutamate. The HisF subunit catalyzes the cyclization activity that produces IGP and AICAR from PRFAR using the ammonia provided by the HisH subunit. The sequence is that of Imidazole glycerol phosphate synthase subunit HisF from Chlorobium phaeovibrioides (strain DSM 265 / 1930) (Prosthecochloris vibrioformis (strain DSM 265)).